The sequence spans 197 residues: Probable GTP-binding protein EngB (197 aa).

The EngB-type G domain occupies 25–197; sequence SAPEIAFAGR…VRDEFFKFTR (173 aa). Residues 33-40, 60-64, 79-82, 146-149, and 177-179 contribute to the GTP site; these read GRSNVGKS, GCTRQ, DLPG, TKID, and ISI. Residues serine 40 and threonine 62 each contribute to the Mg(2+) site.

This sequence belongs to the TRAFAC class TrmE-Era-EngA-EngB-Septin-like GTPase superfamily. EngB GTPase family. Requires Mg(2+) as cofactor.

Necessary for normal cell division and for the maintenance of normal septation. This Wolbachia pipientis subsp. Culex pipiens (strain wPip) protein is Probable GTP-binding protein EngB.